The chain runs to 201 residues: Rac-like GTP-binding protein ARAC2 (201 aa).

13–20 (GDGAVGKT) serves as a coordination point for GTP. An Effector region motif is present at residues 35-43 (YVPTVFDNF). GTP is bound by residues 60–64 (DTAGQ) and 118–121 (TKLD). Cys-198 carries the cysteine methyl ester modification. Cys-198 is lipidated: S-geranylgeranyl cysteine. Residues 199–201 (FFL) constitute a propeptide, removed in mature form.

The protein belongs to the small GTPase superfamily. Rho family. As to expression, expressed exclusively in the root, hypocotyl and stem.

It localises to the cytoplasm. The protein resides in the membrane. In terms of biological role, inactive GDP-bound Rho GTPases reside in the cytosol, are found in a complex with Rho GDP-dissociation inhibitors (Rho GDIs), and are released from the GDI protein in order to translocate to membranes upon activation. The sequence is that of Rac-like GTP-binding protein ARAC2 (ARAC2) from Arabidopsis thaliana (Mouse-ear cress).